The sequence spans 669 residues: Cell surface receptor daf-1 (669 aa).

The first 19 residues, 1-19 (MRIRHVVFCLLALVYGAET), serve as a signal peptide directing secretion. The Extracellular segment spans residues 20-170 (SDDDLDERTN…APGPQQSSTW (151 aa)). 4 N-linked (GlcNAc...) asparagine glycosylation sites follow: Asn-49, Asn-79, Asn-133, and Asn-154. Residues 171 to 191 (LILTILALLTFIVLLGIAIFL) form a helical membrane-spanning segment. The Cytoplasmic segment spans residues 192-669 (TRKSWEAKFD…NDDSSRPLLG (478 aa)). The GS domain occupies 262–292 (NNMKDMLDVLEETSGSGMGPTTLHKLTIGGQ). Residues 293-593 (IRLTGRVGSG…KRMDERQQLL (301 aa)) form the Protein kinase domain. ATP-binding positions include 299–307 (VGSGRFGNV) and Lys-320. The active-site Proton acceptor is Asp-423. Basic and acidic residues-rich tracts occupy residues 611–624 (DRKI…KDES) and 633–650 (VQKE…RETA). Positions 611–669 (DRKILGPQKPKDESPANGAPRIVQKEIDREDEQENWRETAKTPNGHISSNDDSSRPLLG) are disordered. Positions 651-661 (KTPNGHISSND) are enriched in polar residues.

This sequence belongs to the protein kinase superfamily. TKL Ser/Thr protein kinase family. TGFB receptor subfamily. In terms of assembly, may interact with daf-4 to regulate dauer larva development. Head and ventral nerve cord from embryos to adults. Expressed in many sensory neurons. Subset of head neurons show coexpression with daf-4 when dauer/nondauer decision is made. Also expressed in non-neuronal cells: membraneous sheath surrounding the distal end of the intestine and in the distal tip cell of the gonad.

Its subcellular location is the membrane. It catalyses the reaction L-threonyl-[receptor-protein] + ATP = O-phospho-L-threonyl-[receptor-protein] + ADP + H(+). It carries out the reaction L-seryl-[receptor-protein] + ATP = O-phospho-L-seryl-[receptor-protein] + ADP + H(+). Its function is as follows. Probably involved in a TGF-beta pathway. May be a receptor for TGF-beta-like ligand daf-7. Controls the decision of whether or not larvae enter a developmentally arrested state, known as dauer, in response to environmental conditions. Involved in regulating entry into quiescence triggered by satiety. Involved in sensitivity to CO2 levels. In AWC neurons, acts to promote expression of srsx-3, a member of the GPCR family. The chain is Cell surface receptor daf-1 (daf-1) from Caenorhabditis elegans.